The primary structure comprises 196 residues: Imidazoleglycerol-phosphate dehydratase (196 aa).

The protein belongs to the imidazoleglycerol-phosphate dehydratase family.

It localises to the cytoplasm. It catalyses the reaction D-erythro-1-(imidazol-4-yl)glycerol 3-phosphate = 3-(imidazol-4-yl)-2-oxopropyl phosphate + H2O. The protein operates within amino-acid biosynthesis; L-histidine biosynthesis; L-histidine from 5-phospho-alpha-D-ribose 1-diphosphate: step 6/9. The polypeptide is Imidazoleglycerol-phosphate dehydratase (Solidesulfovibrio magneticus (strain ATCC 700980 / DSM 13731 / RS-1) (Desulfovibrio magneticus)).